A 22-amino-acid polypeptide reads, in one-letter code: Zinc finger protein 326 (22 aa).

The disordered stretch occupies residues 1–22 (QGYGFNEPEQTRNQGGSSWEAP). A compositionally biased stretch (polar residues) spans 11–22 (TRNQGGSSWEAP).

It belongs to the AKAP95 family.

Its subcellular location is the nucleus matrix. Probable transcriptional activator which may play a role in neuronal differentiation. Able to bind DNA and activate expression in vitro. This Rattus norvegicus (Rat) protein is Zinc finger protein 326 (Znf326).